The primary structure comprises 158 residues: Small ribosomal subunit protein uS9 (158 aa).

Over residues 1–10 (MSDTMQSLDQ) the composition is skewed to polar residues. The disordered stretch occupies residues 1–35 (MSDTMQSLDQLSALKTAAPDAPKREKKVDKQGRAY). The segment covering 21–32 (APKREKKVDKQG) has biased composition (basic and acidic residues).

The protein belongs to the universal ribosomal protein uS9 family.

This is Small ribosomal subunit protein uS9 from Afipia carboxidovorans (strain ATCC 49405 / DSM 1227 / KCTC 32145 / OM5) (Oligotropha carboxidovorans).